The sequence spans 351 residues: Nuclear inhibitor of protein phosphatase 1 (351 aa).

Residues 1–142 (MAAAANSGSS…LPSAVKGDEK (142 aa)) form an interaction with CDC5L, SF3B1 and MELK region. The 53-residue stretch at 49 to 101 (YLFGRNPDLCDFTIDHQSCSRVHAALVYHKHLKRVFLIDLNSTHGTFLGHIRL) folds into the FHA domain. The interval 143-224 (MGGEDDELKG…VDPSVGRFRN (82 aa)) is interaction with EED. Residue Thr161 is modified to Phosphothreonine; by CK2; in vitro. At Ser178 the chain carries Phosphoserine; by PKA; in vitro. 2 consecutive short sequence motifs (nuclear localization signal) follow at residues 185 to 209 (GNLDIQRPKRKRKNSRVTFSEDDEI) and 210 to 240 (INPEDVDPSVGRFRNMVQTAVVPVKKKRVEG). Positions 191–200 (RPKRKRKNSR) are involved in PP-1 inhibition. The residue at position 199 (Ser199) is a Phosphoserine. The involved in PP-1 binding stretch occupies residues 200-203 (RVTF). The residue at position 204 (Ser204) is a Phosphoserine. Ser249 is subject to Phosphoserine. Residue Tyr264 is modified to Phosphotyrosine. Residues 310–329 (AVNMNPAPNPAVYNPEAVNE) form an interaction with EED region. The segment at 316 to 351 (APNPAVYNPEAVNEPKKKKYAKEAWPGKKPTPSLLI) is disordered. The tract at residues 330-351 (PKKKKYAKEAWPGKKPTPSLLI) is RNA-binding. The involved in PP-1 inhibition stretch occupies residues 331–337 (KKKKYAK). The residue at position 335 (Tyr335) is a Phosphotyrosine.

As to quaternary structure, interacts with phosphorylated CDC5L, SF3B1 and MELK. Interacts with EED. Part of a complex consisting of PPP1R8, EED, HDAC2 and PP-1. Part of the spliceosome. Interacts with PPP1CA, PPP1CB and PPP1CC. In terms of processing, the N-terminus is blocked. Post-translationally, inactivated by phosphorylation on Ser-199 or Ser-204.

It is found in the nucleus. The protein localises to the nucleus speckle. Inhibitor subunit of the major nuclear protein phosphatase-1 (PP-1). It has RNA-binding activity but does not cleave RNA and may target PP-1 to RNA-associated substrates. May also be involved in pre-mRNA splicing. Binds DNA and might act as a transcriptional repressor. Seems to be required for cell proliferation. This chain is Nuclear inhibitor of protein phosphatase 1 (PPP1R8), found in Bos taurus (Bovine).